The primary structure comprises 330 residues: Phosphate acyltransferase (330 aa).

Belongs to the PlsX family. In terms of assembly, homodimer. Probably interacts with PlsY.

The protein localises to the cytoplasm. It catalyses the reaction a fatty acyl-[ACP] + phosphate = an acyl phosphate + holo-[ACP]. It participates in lipid metabolism; phospholipid metabolism. Its function is as follows. Catalyzes the reversible formation of acyl-phosphate (acyl-PO(4)) from acyl-[acyl-carrier-protein] (acyl-ACP). This enzyme utilizes acyl-ACP as fatty acyl donor, but not acyl-CoA. This is Phosphate acyltransferase from Bacillus licheniformis (strain ATCC 14580 / DSM 13 / JCM 2505 / CCUG 7422 / NBRC 12200 / NCIMB 9375 / NCTC 10341 / NRRL NRS-1264 / Gibson 46).